The following is a 271-amino-acid chain: MAAEPPADGRDPPADDGAAGDGAVESAAAEALLSAASEQLTLVYQGEVYVFDPVPPQKVQAVLLVLGGSDMPPGLVSMAVPTTFDEKSTTVAARRIASLMRFREKRKERCFDKKIRYSVRKEVAQKMKRRKGQFAGRADFGDGSCSSAPCGSTANGEDDHIRETHCQNCGISSRLTPAMRRGPAGPRSLCNACGLMWANKGTLRSPLNAPKMTVQHPADLSKTGDTDDSKANLCAEHNQTTMKTDTEMVPEQEQKADVLPPTKEEDSMATS.

The segment at 1-23 is disordered; that stretch reads MAAEPPADGRDPPADDGAAGDGA. One can recognise a Tify domain in the interval 33–68; sequence LSAASEQLTLVYQGEVYVFDPVPPQKVQAVLLVLGG. One can recognise a CCT domain in the interval 95–137; it reads RIASLMRFREKRKERCFDKKIRYSVRKEVAQKMKRRKGQFAGR. The GATA-type zinc-finger motif lies at 166 to 193; sequence CQNCGISSRLTPAMRRGPAGPRSLCNAC. The segment at 238 to 271 is disordered; sequence NQTTMKTDTEMVPEQEQKADVLPPTKEEDSMATS. Residues 252 to 271 are compositionally biased toward basic and acidic residues; it reads QEQKADVLPPTKEEDSMATS.

Belongs to the type IV zinc-finger family. Class C subfamily.

It localises to the nucleus. Transcriptional activator that specifically binds 5'-GATA-3' or 5'-GAT-3' motifs within gene promoters. This is GATA transcription factor 19 from Oryza sativa subsp. indica (Rice).